A 635-amino-acid chain; its full sequence is Threonine--tRNA ligase (635 aa).

The TGS domain occupies 1-61; sequence MVSIRLPDGS…DRDASLAIVT (61 aa). Positions 242 to 533 are catalytic; the sequence is DHRKLGKQLD…LIEHHAGAMP (292 aa). 3 residues coordinate Zn(2+): C333, H384, and H510.

The protein belongs to the class-II aminoacyl-tRNA synthetase family. As to quaternary structure, homodimer. Zn(2+) serves as cofactor.

It localises to the cytoplasm. It catalyses the reaction tRNA(Thr) + L-threonine + ATP = L-threonyl-tRNA(Thr) + AMP + diphosphate + H(+). Functionally, catalyzes the attachment of threonine to tRNA(Thr) in a two-step reaction: L-threonine is first activated by ATP to form Thr-AMP and then transferred to the acceptor end of tRNA(Thr). Also edits incorrectly charged L-seryl-tRNA(Thr). The sequence is that of Threonine--tRNA ligase from Burkholderia pseudomallei (strain 1106a).